The following is a 228-amino-acid chain: Large ribosomal subunit protein bL25 (228 aa).

A disordered region spans residues 196–228 (EEAAVAEAQSAESAEGKAEAEAEATNEKNKSEA). Positions 209-228 (AEGKAEAEAEATNEKNKSEA) are enriched in basic and acidic residues.

The protein belongs to the bacterial ribosomal protein bL25 family. CTC subfamily. In terms of assembly, part of the 50S ribosomal subunit; part of the 5S rRNA/L5/L18/L25 subcomplex. Contacts the 5S rRNA. Binds to the 5S rRNA independently of L5 and L18.

Its function is as follows. This is one of the proteins that binds to the 5S RNA in the ribosome where it forms part of the central protuberance. The chain is Large ribosomal subunit protein bL25 from Methylorubrum extorquens (strain PA1) (Methylobacterium extorquens).